The following is a 379-amino-acid chain: Probable malonyl-CoA-acyl carrier protein transacylase, mitochondrial (379 aa).

The N-terminal 23 residues, 1-23 (MLAARRLLRSPRITGALSWSRWS), are a transit peptide targeting the mitochondrion. Residues S158 and H275 contribute to the active site.

Belongs to the type II malonyltransferase family.

The protein localises to the mitochondrion. It carries out the reaction holo-[ACP] + malonyl-CoA = malonyl-[ACP] + CoA. It participates in lipid metabolism; fatty acid biosynthesis. Functionally, catalyzes the transfer of a malonyl moiety from malonyl-CoA to the free thiol group of the phosphopantetheine arm of the ACP protein. This suggests the existence of the biosynthesis of fatty acids in mitochondria. In Drosophila melanogaster (Fruit fly), this protein is Probable malonyl-CoA-acyl carrier protein transacylase, mitochondrial.